The chain runs to 136 residues: MGKIVITVGKRKRAIARAVAREGKGRIRINKIPIELIEPKYKRMKLMEPILLAGEEVISQMDIDVTVKGGGVMGQMDAARTAIGKAIVEFTGSKELRDKFLAYDRTLLVSDARRTEPHKPSRSTKGPRAKRQKSYR.

Residues 111–136 form a disordered region; sequence DARRTEPHKPSRSTKGPRAKRQKSYR. Basic residues predominate over residues 120–136; it reads PSRSTKGPRAKRQKSYR.

The protein belongs to the universal ribosomal protein uS9 family.

This Methanocaldococcus jannaschii (strain ATCC 43067 / DSM 2661 / JAL-1 / JCM 10045 / NBRC 100440) (Methanococcus jannaschii) protein is Small ribosomal subunit protein uS9 (rps9).